The sequence spans 144 residues: Flagellar assembly factor FliW (144 aa).

The protein belongs to the FliW family. In terms of assembly, interacts with translational regulator CsrA and flagellin(s).

The protein localises to the cytoplasm. In terms of biological role, acts as an anti-CsrA protein, binds CsrA and prevents it from repressing translation of its target genes, one of which is flagellin. Binds to flagellin and participates in the assembly of the flagellum. In Geobacillus kaustophilus (strain HTA426), this protein is Flagellar assembly factor FliW.